The chain runs to 144 residues: Translation initiation factor 5A (144 aa).

K38 carries the hypusine modification.

This sequence belongs to the eIF-5A family.

It is found in the cytoplasm. In terms of biological role, functions by promoting the formation of the first peptide bond. The chain is Translation initiation factor 5A from Nanoarchaeum equitans (strain Kin4-M).